The following is a 149-amino-acid chain: Small ribosomal subunit protein bS16 (149 aa).

Residues 115 to 149 are disordered; that stretch reads KLKAAKSEADAKAKAEAEAAATEEAPAEEPAAEAE. Basic and acidic residues predominate over residues 119 to 131; it reads AKSEADAKAKAEA. Residues 139–149 are compositionally biased toward acidic residues; it reads APAEEPAAEAE.

It belongs to the bacterial ribosomal protein bS16 family.

The protein is Small ribosomal subunit protein bS16 of Bifidobacterium adolescentis (strain ATCC 15703 / DSM 20083 / NCTC 11814 / E194a).